A 425-amino-acid polypeptide reads, in one-letter code: Dihydroorotase (425 aa).

Histidine 60 and histidine 62 together coordinate Zn(2+). Substrate contacts are provided by residues 62-64 (HLR) and asparagine 94. Residues aspartate 152, histidine 179, and histidine 232 each contribute to the Zn(2+) site. A substrate-binding site is contributed by asparagine 278. Aspartate 305 contributes to the Zn(2+) binding site. The active site involves aspartate 305. Histidine 309 lines the substrate pocket.

This sequence belongs to the metallo-dependent hydrolases superfamily. DHOase family. Class I DHOase subfamily. Zn(2+) is required as a cofactor.

The enzyme catalyses (S)-dihydroorotate + H2O = N-carbamoyl-L-aspartate + H(+). It participates in pyrimidine metabolism; UMP biosynthesis via de novo pathway; (S)-dihydroorotate from bicarbonate: step 3/3. In terms of biological role, catalyzes the reversible cyclization of carbamoyl aspartate to dihydroorotate. In Syntrophotalea carbinolica (strain DSM 2380 / NBRC 103641 / GraBd1) (Pelobacter carbinolicus), this protein is Dihydroorotase.